A 428-amino-acid polypeptide reads, in one-letter code: Proline--tRNA ligase (428 aa).

Belongs to the class-II aminoacyl-tRNA synthetase family. ProS type 2 subfamily. Homodimer.

The protein resides in the cytoplasm. It carries out the reaction tRNA(Pro) + L-proline + ATP = L-prolyl-tRNA(Pro) + AMP + diphosphate. Catalyzes the attachment of proline to tRNA(Pro) in a two-step reaction: proline is first activated by ATP to form Pro-AMP and then transferred to the acceptor end of tRNA(Pro). The chain is Proline--tRNA ligase from Rickettsia typhi (strain ATCC VR-144 / Wilmington).